Reading from the N-terminus, the 503-residue chain is ATP synthase subunit beta (503 aa).

ATP is bound at residue 157–164; that stretch reads GGAGVGKT.

Belongs to the ATPase alpha/beta chains family. F-type ATPases have 2 components, CF(1) - the catalytic core - and CF(0) - the membrane proton channel. CF(1) has five subunits: alpha(3), beta(3), gamma(1), delta(1), epsilon(1). CF(0) has three main subunits: a(1), b(2) and c(9-12). The alpha and beta chains form an alternating ring which encloses part of the gamma chain. CF(1) is attached to CF(0) by a central stalk formed by the gamma and epsilon chains, while a peripheral stalk is formed by the delta and b chains.

The protein resides in the cell inner membrane. The catalysed reaction is ATP + H2O + 4 H(+)(in) = ADP + phosphate + 5 H(+)(out). Produces ATP from ADP in the presence of a proton gradient across the membrane. The catalytic sites are hosted primarily by the beta subunits. This chain is ATP synthase subunit beta, found in Flavobacterium johnsoniae (strain ATCC 17061 / DSM 2064 / JCM 8514 / BCRC 14874 / CCUG 350202 / NBRC 14942 / NCIMB 11054 / UW101) (Cytophaga johnsonae).